The sequence spans 173 residues: Insertion element IS150 protein InsJ (173 aa).

The protein belongs to the IS150/IS1296 orfA family.

In Escherichia coli (strain K12), this protein is Insertion element IS150 protein InsJ (insJ).